A 449-amino-acid chain; its full sequence is MLSSQTSSIFTVSRLNQTVRLLLEQEMGQVWISGEISNFTQPASGHWYFTLKDDTAQVRCAMFRNSNRRVTFRPQHGQQVLVRANITLYEPRGDYQIIAESMQPAGEGLLQQKYEQLKAKLQAEGLFDQQHKQPLPSPAHCVGVITSKTGAALHDILHVLKRRDPSLPVIIYPTAVQGDDAPGQIVRAIELANARGECDVLIVGRGGGSLEDLWSFNDERVARAIFASRIPVVSAVGHETDVTIADFVADLRAPTPSAAAEIVSRNQQELLRQIQSAQQRLGMAMDYYLANRSRRFTQIFHRLQQQHPQLRLARQQTALERLRQRMGFALEARIKQANQRQQCVSQRLSQQNPQPRIHRAQSRIQQLEYRLTENIRSRLSEQRERFGNAVTHLEAVSPLATLARGYTVSTTTDGKVLKKIKQVKAGDIMTTRLEDGWLESEVKSVTPGT.

It belongs to the XseA family. In terms of assembly, heterooligomer composed of large and small subunits.

Its subcellular location is the cytoplasm. The enzyme catalyses Exonucleolytic cleavage in either 5'- to 3'- or 3'- to 5'-direction to yield nucleoside 5'-phosphates.. Its function is as follows. Bidirectionally degrades single-stranded DNA into large acid-insoluble oligonucleotides, which are then degraded further into small acid-soluble oligonucleotides. This Salmonella typhimurium (strain LT2 / SGSC1412 / ATCC 700720) protein is Exodeoxyribonuclease 7 large subunit.